The chain runs to 2318 residues: Neurogenic locus notch homolog protein 3 (2318 aa).

Residues 1-14 (MGLGARGRRRRRRL) are compositionally biased toward basic residues. The tract at residues 1-20 (MGLGARGRRRRRRLMALPPP) is disordered. An N-terminal signal peptide occupies residues 1-39 (MGLGARGRRRRRRLMALPPPPPPMRALPLLLLLAGLGAA). 3 EGF-like domains span residues 40–78 (APPCLDGSPCANGGRCTHQQPSLEAACLCLPGWVGERCQ), 79–119 (LEDP…PDCS), and 120–157 (QPDPCVSRPCVHGAPCSVGPDGRFACACPPGYQGQSCQ). Residues 40–1643 (APPCLDGSPC…PLEAPEQSVP (1604 aa)) are Extracellular-facing. 99 cysteine pairs are disulfide-bonded: Cys-43-Cys-55, Cys-49-Cys-66, Cys-68-Cys-77, Cys-83-Cys-94, Cys-88-Cys-107, Cys-109-Cys-118, Cys-124-Cys-135, Cys-129-Cys-145, Cys-147-Cys-156, Cys-163-Cys-175, Cys-169-Cys-184, Cys-186-Cys-195, Cys-202-Cys-213, Cys-207-Cys-223, Cys-225-Cys-234, Cys-241-Cys-252, Cys-246-Cys-261, Cys-263-Cys-272, Cys-279-Cys-292, Cys-286-Cys-301, Cys-303-Cys-312, Cys-319-Cys-330, Cys-324-Cys-339, Cys-341-Cys-350, Cys-356-Cys-367, Cys-361-Cys-378, Cys-380-Cys-389, Cys-396-Cys-409, Cys-403-Cys-418, Cys-420-Cys-429, Cys-436-Cys-447, Cys-441-Cys-456, Cys-458-Cys-467, Cys-474-Cys-485, Cys-479-Cys-494, Cys-496-Cys-505, Cys-512-Cys-523, Cys-517-Cys-532, Cys-534-Cys-543, Cys-550-Cys-560, Cys-555-Cys-569, Cys-571-Cys-580, Cys-587-Cys-598, Cys-592-Cys-607, Cys-609-Cys-618, Cys-625-Cys-635, Cys-630-Cys-644, Cys-646-Cys-655, Cys-662-Cys-673, Cys-667-Cys-682, Cys-684-Cys-693, Cys-700-Cys-710, Cys-705-Cys-719, Cys-721-Cys-730, Cys-739-Cys-750, Cys-744-Cys-759, Cys-761-Cys-770, Cys-776-Cys-787, Cys-781-Cys-797, Cys-799-Cys-808, Cys-815-Cys-827, Cys-821-Cys-836, Cys-838-Cys-847, Cys-854-Cys-865, Cys-859-Cys-874, Cys-876-Cys-885, Cys-892-Cys-902, Cys-897-Cys-911, Cys-913-Cys-922, Cys-929-Cys-940, Cys-934-Cys-949, Cys-951-Cys-960, Cys-967-Cys-978, Cys-972-Cys-987, Cys-989-Cys-998, Cys-1005-Cys-1016, Cys-1010-Cys-1023, Cys-1025-Cys-1034, Cys-1041-Cys-1062, Cys-1056-Cys-1071, Cys-1073-Cys-1082, Cys-1089-Cys-1100, Cys-1094-Cys-1109, Cys-1111-Cys-1120, Cys-1127-Cys-1138, Cys-1132-Cys-1147, Cys-1149-Cys-1158, Cys-1165-Cys-1183, Cys-1177-Cys-1192, Cys-1194-Cys-1203, Cys-1210-Cys-1223, Cys-1215-Cys-1233, Cys-1235-Cys-1244, Cys-1251-Cys-1262, Cys-1256-Cys-1276, Cys-1278-Cys-1287, Cys-1294-Cys-1305, Cys-1299-Cys-1314, and Cys-1316-Cys-1325. An EGF-like 4; calcium-binding domain is found at 159 to 196 (DIDECRSGTTCRHGGTCLNTPGSFRCQCPLGYTGLLCE). In terms of domain architecture, EGF-like 5 spans 198-235 (PVVPCAPSPCRNGGTCRQSSDVTYDCACLPGFEGQNCE). The region spanning 237 to 273 (NVDDCPGHRCLNGGTCVDGVNTYNCQCPPEWTGQFCT) is the EGF-like 6; calcium-binding domain. Positions 275 to 313 (DVDECQLQPNACHNGGTCFNLLGGHSCVCVNGWTGESCS) constitute an EGF-like 7 domain. One can recognise an EGF-like 8; calcium-binding domain in the interval 315–351 (NIDDCATAVCFHGATCHDRVASFYCACPMGKTGLLCH). One can recognise an EGF-like 9 domain in the interval 352-390 (LDDACVSNPCHEDAICDTNPVSGRAICTCPPGFTGGACD). The EGF-like 10; calcium-binding domain maps to 392-430 (DVDECSIGANPCEHLGRCVNTQGSFLCQCGRGYTGPRCE). In terms of domain architecture, EGF-like 11; calcium-binding spans 432-468 (DVNECLSGPCRNQATCLDRIGQFTCICMAGFTGTYCE). The 37-residue stretch at 470-506 (DIDECQSSPCVNGGVCKDRVNGFSCTCPSGFSGSMCQ) folds into the EGF-like 12; calcium-binding domain. An EGF-like 13; calcium-binding domain is found at 508–544 (DVDECASTPCRNGAKCVDQPDGYECRCAEGFEGTLCE). In terms of domain architecture, EGF-like 14; calcium-binding spans 546–581 (NVDDCSPDPCHHGRCVDGIASFSCACAPGYTGIRCE). An EGF-like 15; calcium-binding domain is found at 583-619 (QVDECRSQPCRYGGKCLDLVDKYLCRCPPGTTGVNCE). One can recognise an EGF-like 16; calcium-binding domain in the interval 621 to 656 (NIDDCASNPCTFGVCRDGINRYDCVCQPGFTGPLCN). The region spanning 658–694 (EINECASSPCGEGGSCVDGENGFHCLCPPGSLPPLCL) is the EGF-like 17; calcium-binding domain. 3 EGF-like domains span residues 696 to 731 (ANHPCAHKPCSHGVCHDAPGGFRCVCEPGWSGPRCS), 735 to 771 (APDACESQPCQAGGTCTSDGIGFRCTCAPGFQGHQCE), and 772 to 809 (VLSPCTPSLCEHGGHCESDPDRLTVCSCPPGWQGPRCQ). The EGF-like 21; calcium-binding domain maps to 811–848 (DVDECAGASPCGPHGTCTNLPGNFRCICHRGYTGPFCD). An EGF-like 22; calcium-binding domain is found at 850 to 886 (DIDDCDPNPCLHGGSCQDGVGSFSCSCLDGFAGPRCA). An EGF-like 23; calcium-binding domain is found at 888-923 (DVDECLSSPCGPGTCTDHVASFTCACPPGYGGFHCE). EGF-like domains are found at residues 925–961 (DLPDCSPSSCFNGGTCVDGVSSFSCLCRPGYTGTHCQ), 963–999 (EADPCFSRPCLHGGICNPTHPGFECTCREGFTGSQCQ), 1001–1035 (PVDWCSQAPCQNGGRCVQTGAYCICPPGWSGRLCD), 1037–1083 (QSLP…SHCE), and 1085–1121 (EVDPCTAQPCQHGGTCRGYMGGYVCECPAGYAGDSCE). The 37-residue stretch at 1123–1159 (NIDECASQPCQNGGSCIDLVARYLCSCPPGTLGVLCE) folds into the EGF-like 29; calcium-binding domain. Residues 1161 to 1204 (NEDDCDLGPSLDSGVQCLHNGTCVDLVGGFRCNCPPGYTGLHCE) form the EGF-like 30; calcium-binding domain. An N-linked (GlcNAc...) asparagine glycan is attached at Asn-1180. 4 EGF-like domains span residues 1206 to 1245 (DINECRPGACHAAHTRDCLQDPGGHFRCVCHPGFTGPRCQ), 1247 to 1288 (ALSP…LRCE), 1290 to 1326 (VARSCRELQCPVGIPCQQTARGPRCACPPGLSGPSCR), and 1336 to 1374 (TNASCASAPCLHGGSCLPVQSVPFFRCVCAPGWGGPRCE). Residue Asn-1337 is glycosylated (N-linked (GlcNAc...) asparagine). 12 cysteine pairs are disulfide-bonded: Cys-1340–Cys-1351, Cys-1345–Cys-1362, Cys-1364–Cys-1373, Cys-1388–Cys-1411, Cys-1393–Cys-1406, Cys-1402–Cys-1418, Cys-1429–Cys-1452, Cys-1434–Cys-1447, Cys-1443–Cys-1459, Cys-1468–Cys-1494, Cys-1476–Cys-1489, and Cys-1485–Cys-1501. 3 LNR repeats span residues 1388–1428 (CPRA…PWRQ), 1429–1466 (CEALQCWRLFNNSRCDPACSSPACLYDNFDCYSGGRDR), and 1468–1506 (CNPVYEKYCADHFADGRCDQGCNTEECGWDGLDCASEVP). N-linked (GlcNAc...) asparagine glycosylation is present at Asn-1439. The chain crosses the membrane as a helical span at residues 1644-1664 (LLPLLVAGAVFLLIIFILGVM). Topologically, residues 1665–2318 (VARRKREHST…EVTPKRQVMA (654 aa)) are cytoplasmic. ANK repeat units lie at residues 1839 to 1868 (TGETALHLAARYARADAAKRLLDAGADTNA), 1872 to 1902 (SGRTPLHTAVTADAQGVFQILIRNRSTDLDA), 1906 to 1935 (DGSTALILAARLAVEGMVEELIASHADVNA), 1939 to 1968 (LGKSALHWAAAVNNVEATLALLKNGANKDM), and 1972 to 2001 (KEETPLFLAAREGSYEAAKLLLDHLANREI). Disordered regions lie at residues 2025-2045 (LDQPSGPRSPSGPHGLGPLLC) and 2058-2126 (QSGT…PLEG). Positions 2028–2045 (PSGPRSPSGPHGLGPLLC) are enriched in low complexity. Arg-2174 carries the omega-N-methylarginine modification. Low complexity predominate over residues 2184 to 2193 (SFLLPLAPGP). The tract at residues 2184–2318 (SFLLPLAPGP…EVTPKRQVMA (135 aa)) is disordered. A PEST-like region spans residues 2242–2261 (HPYLTPSPESPEHWASPSPP). Positions 2262–2282 (SLSDWSDSTPSPATATNATAS) are enriched in low complexity. The span at 2296-2305 (SLPQSQTQLG) shows a compositional bias: polar residues.

This sequence belongs to the NOTCH family. Interacts with PSMA1. Heterodimer of a C-terminal fragment N(TM) and a N-terminal fragment N(EC) which are probably linked by disulfide bonds. Interacts with MAML1, MAML2 and MAML3 which act as transcriptional coactivators for NOTCH3. Interacts with HIF1AN. Synthesized in the endoplasmic reticulum as an inactive form which is proteolytically cleaved by a furin-like convertase in the trans-Golgi network before it reaches the plasma membrane to yield an active, ligand-accessible form. Cleavage results in a C-terminal fragment N(TM) and a N-terminal fragment N(EC). Following ligand binding, it is cleaved by TNF-alpha converting enzyme (TACE) to yield a membrane-associated intermediate fragment called notch extracellular truncation (NEXT). This fragment is then cleaved by presenilin dependent gamma-secretase to release a notch-derived peptide containing the intracellular domain (NICD) from the membrane. Post-translationally, phosphorylated. In terms of processing, hydroxylated by HIF1AN. In terms of tissue distribution, proliferating neuroepithelium.

It is found in the cell membrane. The protein localises to the nucleus. Functions as a receptor for membrane-bound ligands Jagged1, Jagged2 and Delta1 to regulate cell-fate determination. Upon ligand activation through the released notch intracellular domain (NICD) it forms a transcriptional activator complex with RBPJ/RBPSUH and activates genes of the enhancer of split locus. Affects the implementation of differentiation, proliferation and apoptotic programs. May play a role during CNS development. In Mus musculus (Mouse), this protein is Neurogenic locus notch homolog protein 3 (Notch3).